Consider the following 396-residue polypeptide: 1-deoxy-D-xylulose 5-phosphate reductoisomerase (396 aa).

Positions 17, 18, 19, 20, 47, and 130 each coordinate NADPH. Lysine 131 contributes to the 1-deoxy-D-xylulose 5-phosphate binding site. Glutamate 132 lines the NADPH pocket. Residue aspartate 156 coordinates Mn(2+). Serine 157, glutamate 158, serine 182, and histidine 205 together coordinate 1-deoxy-D-xylulose 5-phosphate. Glutamate 158 lines the Mn(2+) pocket. Glycine 211 is an NADPH binding site. Residues serine 218, asparagine 223, lysine 224, and glutamate 227 each coordinate 1-deoxy-D-xylulose 5-phosphate. Position 227 (glutamate 227) interacts with Mn(2+).

Belongs to the DXR family. Mg(2+) is required as a cofactor. Mn(2+) serves as cofactor.

The catalysed reaction is 2-C-methyl-D-erythritol 4-phosphate + NADP(+) = 1-deoxy-D-xylulose 5-phosphate + NADPH + H(+). It participates in isoprenoid biosynthesis; isopentenyl diphosphate biosynthesis via DXP pathway; isopentenyl diphosphate from 1-deoxy-D-xylulose 5-phosphate: step 1/6. In terms of biological role, catalyzes the NADPH-dependent rearrangement and reduction of 1-deoxy-D-xylulose-5-phosphate (DXP) to 2-C-methyl-D-erythritol 4-phosphate (MEP). This Rhizobium etli (strain ATCC 51251 / DSM 11541 / JCM 21823 / NBRC 15573 / CFN 42) protein is 1-deoxy-D-xylulose 5-phosphate reductoisomerase.